A 210-amino-acid chain; its full sequence is Homeobox protein Rhox5 (210 aa).

Residues 29–117 are disordered; it reads KAEAFLQAGE…KNGKPEDRQM (89 aa). The segment at residues 117 to 175 is a DNA-binding region (homeobox; atypical); the sequence is MPLQGSRFAQQRLSELQSILQRTNSFDVPREDLYRLMDTCVARVQNWFKIRRAAARRNR.

The protein localises to the nucleus. Transcription factor required for differentiation of embryonic stem cells (ESCs) into primordial germ cells. The polypeptide is Homeobox protein Rhox5 (Rhox5) (Mus minutoides (Southern African pygmy mouse)).